Here is an 823-residue protein sequence, read N- to C-terminus: Protein ROOT HAIR DEFECTIVE 3 homolog 2 (823 aa).

The Cytoplasmic segment spans residues M1–L688. The GB1/RHD3-type G domain maps to G45–R260. G55–S62 contacts GTP. Residues L226 to R246 adopt a coiled-coil conformation. A helical transmembrane segment spans residues P689–L709. At R710–P712 the chain is on the lumenal side. The helical transmembrane segment at L713–D733 threads the bilayer. Over I734–S823 the chain is Cytoplasmic. Residues N770–S823 are disordered. Residues P786–S823 show a composition bias toward low complexity.

This sequence belongs to the TRAFAC class dynamin-like GTPase superfamily. GB1/RHD3 GTPase family. RHD3 subfamily.

It localises to the endoplasmic reticulum membrane. In terms of biological role, probable GTP-binding protein that may be involved in cell development. The chain is Protein ROOT HAIR DEFECTIVE 3 homolog 2 from Oryza sativa subsp. japonica (Rice).